The primary structure comprises 85 residues: Sugar transporter SemiSWEET (85 aa).

Residues 2 to 59 (ENLIGYVAAFLTTVSFLPQVLRVVMTKQTRDISRNMYIMFFLGVVLWFVYGILRSDLP) form the PQ-loop domain. 3 helical membrane-spanning segments follow: residues 5-25 (IGYVAAFLTTVSFLPQVLRVV), 33-53 (ISRNMYIMFFLGVVLWFVYGI), and 57-77 (DLPIILANVVTLFFVTIILYY).

Homodimer.

The protein resides in the cell membrane. The homodimer mediates transmembrane sugar transport down a concentration gradient. Transport is probably effected by rocking-type movements, where a cargo-binding cavity opens first on one and then on the other side of the membrane. The protein is Sugar transporter SemiSWEET of Leptospira biflexa serovar Patoc (strain Patoc 1 / ATCC 23582 / Paris).